A 182-amino-acid polypeptide reads, in one-letter code: Early nodulin-like protein 14 (182 aa).

A signal peptide spans 1-28 (MFLSASMASSSLHVAIFSLIFLFSLAAA). The region spanning 29–133 (NEVTVGGKSG…GQKLSLVVIS (105 aa)) is the Phytocyanin domain. The cysteines at positions 87 and 121 are disulfide-linked. Residues Asn-88 and Asn-95 are each glycosylated (N-linked (GlcNAc...) asparagine). The GPI-anchor amidated serine moiety is linked to residue Ser-160. A propeptide spans 161 to 182 (GSVRLGGCYVVLGLVLGLCAWF) (removed in mature form).

It belongs to the early nodulin-like (ENODL) family. In terms of assembly, interacts strongly and specifically with the extracellular domain of FERONIA at the synergid cell surface. Mostly expressed in seedlings and flowers, and, to a lower extent, in roots, stems and seeds, but barely in leaves.

The protein resides in the cell membrane. In terms of biological role, may act as a carbohydrate transporter. Required, together with ENODL11, ENODL12, ENODL13, ENODL14 and ENODL15, for male-female communication and pollen tube reception and burst at the synergid cell surface of the female gametophyte. The polypeptide is Early nodulin-like protein 14 (Arabidopsis thaliana (Mouse-ear cress)).